The chain runs to 451 residues: Bifunctional protein GlmU (451 aa).

Positions Met-1–Arg-225 are pyrophosphorylase. Residues Leu-8–Gly-11, Lys-22, Gln-73, Gly-78–Thr-79, Tyr-99–Asp-101, Gly-135, Glu-150, Asn-165, and Asn-223 contribute to the UDP-N-acetyl-alpha-D-glucosamine site. Position 101 (Asp-101) interacts with Mg(2+). Asn-223 serves as a coordination point for Mg(2+). The linker stretch occupies residues Ile-226–Lys-246. The tract at residues Gly-247–Lys-451 is N-acetyltransferase. Arg-329 and Lys-347 together coordinate UDP-N-acetyl-alpha-D-glucosamine. The active-site Proton acceptor is the His-359. UDP-N-acetyl-alpha-D-glucosamine-binding residues include Tyr-362 and Asn-373. Acetyl-CoA is bound by residues Ala-376, Asn-382–Tyr-383, Ser-401, Ala-419, and Arg-436.

This sequence in the N-terminal section; belongs to the N-acetylglucosamine-1-phosphate uridyltransferase family. In the C-terminal section; belongs to the transferase hexapeptide repeat family. Homotrimer. The cofactor is Mg(2+).

It localises to the cytoplasm. It catalyses the reaction alpha-D-glucosamine 1-phosphate + acetyl-CoA = N-acetyl-alpha-D-glucosamine 1-phosphate + CoA + H(+). The enzyme catalyses N-acetyl-alpha-D-glucosamine 1-phosphate + UTP + H(+) = UDP-N-acetyl-alpha-D-glucosamine + diphosphate. Its pathway is nucleotide-sugar biosynthesis; UDP-N-acetyl-alpha-D-glucosamine biosynthesis; N-acetyl-alpha-D-glucosamine 1-phosphate from alpha-D-glucosamine 6-phosphate (route II): step 2/2. It participates in nucleotide-sugar biosynthesis; UDP-N-acetyl-alpha-D-glucosamine biosynthesis; UDP-N-acetyl-alpha-D-glucosamine from N-acetyl-alpha-D-glucosamine 1-phosphate: step 1/1. The protein operates within bacterial outer membrane biogenesis; LPS lipid A biosynthesis. Functionally, catalyzes the last two sequential reactions in the de novo biosynthetic pathway for UDP-N-acetylglucosamine (UDP-GlcNAc). The C-terminal domain catalyzes the transfer of acetyl group from acetyl coenzyme A to glucosamine-1-phosphate (GlcN-1-P) to produce N-acetylglucosamine-1-phosphate (GlcNAc-1-P), which is converted into UDP-GlcNAc by the transfer of uridine 5-monophosphate (from uridine 5-triphosphate), a reaction catalyzed by the N-terminal domain. This is Bifunctional protein GlmU from Francisella philomiragia subsp. philomiragia (strain ATCC 25017 / CCUG 19701 / FSC 153 / O#319-036).